Reading from the N-terminus, the 399-residue chain is MNTLDFDKQPEETRVVVAMSGGVDSSVVAGLLKQQGYDVLGITLQLYDHGAAVHRAGSCCAGQDIDDARRVCETLGIPHYVLDYEKRFRETVINPFAESYVAGETPIPCVSCNQTVKFADLLATAKELGADALATGHYIRSRPNPSPEHPGRRALYRPADADRDQSYFLFATTQEQIDYLRFPLGGLPKAETRRLAEEMGLVVAKKADSQDICFVPQGKYSDIITKLKPNAALAGEIVHLDGRVLGTHEGILHFTIGQRRGIGIATGEPLYVVFLDARSRRVIVGPKEALETHRVYLRDVNWLGDETLAQAATGDGFACYAKVRSTRAPAPAVLHIDATGTYVDLTVGEAGIAPGQACALYSAPGDNARVFGGGFIERSEREPSAEASLKALLASPVAA.

ATP contacts are provided by residues 18–25 (AMSGGVDS) and leucine 44. The active-site Nucleophile is cysteine 112. The cysteines at positions 112 and 213 are disulfide-linked. Glycine 136 provides a ligand contact to ATP. Residues 163–165 (RDQ) form an interaction with tRNA region. The active-site Cysteine persulfide intermediate is cysteine 213.

The protein belongs to the MnmA/TRMU family.

Its subcellular location is the cytoplasm. It catalyses the reaction S-sulfanyl-L-cysteinyl-[protein] + uridine(34) in tRNA + AH2 + ATP = 2-thiouridine(34) in tRNA + L-cysteinyl-[protein] + A + AMP + diphosphate + H(+). Its function is as follows. Catalyzes the 2-thiolation of uridine at the wobble position (U34) of tRNA, leading to the formation of s(2)U34. The protein is tRNA-specific 2-thiouridylase MnmA of Rhizobium leguminosarum bv. trifolii (strain WSM2304).